The following is a 512-amino-acid chain: 2,3-bisphosphoglycerate-independent phosphoglycerate mutase (512 aa).

Residues Asp-12 and Ser-62 each contribute to the Mn(2+) site. Ser-62 functions as the Phosphoserine intermediate in the catalytic mechanism. Substrate-binding positions include His-123, 153–154 (RD), Arg-185, Arg-191, 260–263 (RPDR), and Lys-333. Mn(2+) contacts are provided by Asp-400, His-404, Asp-441, His-442, and His-460.

Belongs to the BPG-independent phosphoglycerate mutase family. Monomer. Requires Mn(2+) as cofactor.

It carries out the reaction (2R)-2-phosphoglycerate = (2R)-3-phosphoglycerate. It participates in carbohydrate degradation; glycolysis; pyruvate from D-glyceraldehyde 3-phosphate: step 3/5. In terms of biological role, catalyzes the interconversion of 2-phosphoglycerate and 3-phosphoglycerate. The protein is 2,3-bisphosphoglycerate-independent phosphoglycerate mutase of Clostridium beijerinckii (strain ATCC 51743 / NCIMB 8052) (Clostridium acetobutylicum).